Consider the following 512-residue polypeptide: Maturase K (512 aa).

Belongs to the intron maturase 2 family. MatK subfamily.

The protein localises to the plastid. It localises to the chloroplast. Functionally, usually encoded in the trnK tRNA gene intron. Probably assists in splicing its own and other chloroplast group II introns. The polypeptide is Maturase K (Soldanella alpina (Alpine snowbell)).